A 95-amino-acid polypeptide reads, in one-letter code: DNA-directed RNA polymerase subunit Rpo11 (95 aa).

Belongs to the archaeal Rpo11/eukaryotic RPB11/RPC19 RNA polymerase subunit family. As to quaternary structure, part of the RNA polymerase complex.

The protein resides in the cytoplasm. It catalyses the reaction RNA(n) + a ribonucleoside 5'-triphosphate = RNA(n+1) + diphosphate. Its function is as follows. DNA-dependent RNA polymerase (RNAP) catalyzes the transcription of DNA into RNA using the four ribonucleoside triphosphates as substrates. In Pyrococcus horikoshii (strain ATCC 700860 / DSM 12428 / JCM 9974 / NBRC 100139 / OT-3), this protein is DNA-directed RNA polymerase subunit Rpo11.